A 373-amino-acid chain; its full sequence is Spore germination protein KB (373 aa).

Helical transmembrane passes span 11–31, 37–57, 78–98, 105–125, 143–163, 185–205, 219–239, 269–289, 306–326, and 338–358; these read LFVM…PGSM, WIAV…YQGI, LSWL…ARVL, LLTF…LMVV, LLFG…IVSG, VFTQ…MIFP, IAMA…ISVL, VFFM…YLYA, LAYP…TNFS, and LYIH…VAVW.

Belongs to the amino acid-polyamine-organocation (APC) superfamily. Spore germination protein (SGP) (TC 2.A.3.9) family.

It localises to the cell membrane. Involved in the germination response to the combination of glucose, fructose, L-asparagine, and KCl. The protein is Spore germination protein KB (gerKB) of Bacillus subtilis (strain 168).